The following is a 109-amino-acid chain: Cell cycle protein GpsB (109 aa).

The stretch at 36–63 forms a coiled coil; sequence IKDYETYAALVKSLRQEIADLKEELTRK.

Belongs to the GpsB family. As to quaternary structure, forms polymers through the coiled coil domains. Interacts with PBP1, MreC and EzrA.

It is found in the cytoplasm. Its function is as follows. Divisome component that associates with the complex late in its assembly, after the Z-ring is formed, and is dependent on DivIC and PBP2B for its recruitment to the divisome. Together with EzrA, is a key component of the system that regulates PBP1 localization during cell cycle progression. Its main role could be the removal of PBP1 from the cell pole after pole maturation is completed. Also contributes to the recruitment of PBP1 to the division complex. Not essential for septum formation. In Streptococcus pneumoniae serotype 4 (strain ATCC BAA-334 / TIGR4), this protein is Cell cycle protein GpsB.